We begin with the raw amino-acid sequence, 334 residues long: Fructose-1,6-bisphosphatase class 1 (334 aa).

Positions 92, 114, 116, and 117 each coordinate Mg(2+). Substrate is bound by residues 117-120 (DGSS) and Asn209. Glu281 serves as a coordination point for Mg(2+).

This sequence belongs to the FBPase class 1 family. In terms of assembly, homotetramer. The cofactor is Mg(2+).

Its subcellular location is the cytoplasm. The enzyme catalyses beta-D-fructose 1,6-bisphosphate + H2O = beta-D-fructose 6-phosphate + phosphate. It participates in carbohydrate biosynthesis; gluconeogenesis. This chain is Fructose-1,6-bisphosphatase class 1, found in Nitrosomonas europaea (strain ATCC 19718 / CIP 103999 / KCTC 2705 / NBRC 14298).